Here is a 496-residue protein sequence, read N- to C-terminus: ATP synthase subunit beta 1 (496 aa).

167–174 (GGAGVGKT) lines the ATP pocket. The disordered stretch occupies residues 474 to 496 (REAAAAQQSTAQQAAPAEKEPAA). Low complexity predominate over residues 476-489 (AAAAQQSTAQQAAP).

It belongs to the ATPase alpha/beta chains family. In terms of assembly, F-type ATPases have 2 components, CF(1) - the catalytic core - and CF(0) - the membrane proton channel. CF(1) has five subunits: alpha(3), beta(3), gamma(1), delta(1), epsilon(1). CF(0) has three main subunits: a(1), b(2) and c(9-12). The alpha and beta chains form an alternating ring which encloses part of the gamma chain. CF(1) is attached to CF(0) by a central stalk formed by the gamma and epsilon chains, while a peripheral stalk is formed by the delta and b chains.

The protein localises to the cell inner membrane. The catalysed reaction is ATP + H2O + 4 H(+)(in) = ADP + phosphate + 5 H(+)(out). Produces ATP from ADP in the presence of a proton gradient across the membrane. The catalytic sites are hosted primarily by the beta subunits. The polypeptide is ATP synthase subunit beta 1 (Paraburkholderia xenovorans (strain LB400)).